The sequence spans 686 residues: tRNA (guanine(37)-N(1))-methyltransferase (686 aa).

The segment at G206–Y244 is disordered. S-adenosyl-L-methionine contacts are provided by residues H428, D466–L467, D495–G496, and N530.

This sequence belongs to the class I-like SAM-binding methyltransferase superfamily. TRM5/TYW2 family. Monomer.

It is found in the mitochondrion matrix. The protein localises to the nucleus. It localises to the cytoplasm. The enzyme catalyses guanosine(37) in tRNA + S-adenosyl-L-methionine = N(1)-methylguanosine(37) in tRNA + S-adenosyl-L-homocysteine + H(+). In terms of biological role, specifically methylates the N1 position of guanosine-37 in various cytoplasmic and mitochondrial tRNAs. Methylation is not dependent on the nature of the nucleoside 5' of the target nucleoside. This is the first step in the biosynthesis of wybutosine (yW), a modified base adjacent to the anticodon of tRNAs and required for accurate decoding. The chain is tRNA (guanine(37)-N(1))-methyltransferase from Leishmania major.